Here is a 78-residue protein sequence, read N- to C-terminus: Small outer capsid protein (78 aa).

It belongs to the Tevenvirinae Soc family. As to quaternary structure, homotrimer. Interacts with the major capsid protein; three soc molecules associate with each interface between the major capsid protein facets.

It localises to the virion. Functionally, capsid decoration protein which helps to stabilize the capsid against extremes of pH and temperature. Once maturation and expansion of the capsid has occured, trimers of soc attach the interfaces between the hexamer of the major capsid protein. Acts as a 'glue' between neighboring hexameric capsomers. Dispensable for the head morphogenesis and phage infection. The protein is Small outer capsid protein of Escherichia phage RB69 (Bacteriophage RB69).